A 982-amino-acid chain; its full sequence is Filament-like plant protein 4 (982 aa).

Coiled coils occupy residues 39-83 and 125-291; these read DQYT…VAKE and EDRA…RKKL. The disordered stretch occupies residues 311 to 333; that stretch reads DHRQDHRQRRSPVRPSSPLMSPM. Over residues 323–333 the composition is skewed to low complexity; that stretch reads VRPSSPLMSPM. A coiled-coil region spans residues 345–401; the sequence is DNMQKFHKENDLLTERLLAMEEETKMLKEALAKRNSELQVSRNLCAKTANRLQTLEA. Over residues 423–433 the composition is skewed to polar residues; the sequence is QNASNPPSMAS. Disordered stretches follow at residues 423–466 and 687–711; these read QNAS…AKIK and QKDSSGEHYQNGCSQSSDSEIPDDC. Positions 452-475 form a coiled coil; it reads ELSQSNKDKANAKIKKTESANQLE. Positions 457–466 are enriched in basic and acidic residues; the sequence is NKDKANAKIK. A compositionally biased stretch (polar residues) spans 693-705; sequence EHYQNGCSQSSDS. The stretch at 722-885 forms a coiled coil; it reads ATCKFTTEEF…AECQETILLL (164 aa). Polar residues-rich tracts occupy residues 896–910 and 918–943; these read TEQVASSPSQEQQAL and ATSTNPQDSKLSSPSDKDTPSMNTMK. Residues 896-982 form a disordered region; that stretch reads TEQVASSPSQ…FSRFFSTKAK (87 aa).

This sequence belongs to the FPP family. In terms of assembly, interacts with WPP/MAF proteins.

The protein is Filament-like plant protein 4 (FPP4) of Arabidopsis thaliana (Mouse-ear cress).